The sequence spans 400 residues: Enoyl-[acyl-carrier-protein] reductase [NADH] (400 aa).

Residues 48–53, 74–75, 111–112, and 139–140 contribute to the NAD(+) site; these read GASTGY, FE, DA, and LA. Tyrosine 225 lines the substrate pocket. The Proton donor role is filled by tyrosine 235. NAD(+)-binding positions include lysine 244 and 273 to 275; that span reads VVT.

The protein belongs to the TER reductase family. As to quaternary structure, monomer.

The enzyme catalyses a 2,3-saturated acyl-[ACP] + NAD(+) = a (2E)-enoyl-[ACP] + NADH + H(+). It functions in the pathway lipid metabolism; fatty acid biosynthesis. Involved in the final reduction of the elongation cycle of fatty acid synthesis (FAS II). Catalyzes the reduction of a carbon-carbon double bond in an enoyl moiety that is covalently linked to an acyl carrier protein (ACP). The protein is Enoyl-[acyl-carrier-protein] reductase [NADH] of Burkholderia ambifaria (strain MC40-6).